We begin with the raw amino-acid sequence, 444 residues long: Probable D-serine dehydratase (444 aa).

K118 is subject to N6-(pyridoxal phosphate)lysine.

It belongs to the serine/threonine dehydratase family. DsdA subfamily. The cofactor is pyridoxal 5'-phosphate.

The catalysed reaction is D-serine = pyruvate + NH4(+). This chain is Probable D-serine dehydratase, found in Acinetobacter baumannii (strain ACICU).